We begin with the raw amino-acid sequence, 426 residues long: MSKSENLYSAARELIPGGVNSPVRAFTGVGGTPLFIEKADGAYLYDVDGKAYIDYVGSWGPMVLGHNHPAIRNAVIEAAERGLSFGAPTEMEVKMAELVTNLVPTMDMVRMVNSGTEATMSAIRLARGFTGRDKIIKFEGCYHGHADCLLVKAGSGALTLGQPNSPGVPADFAKHTLTCTYNDLTSVRAAFEQYPQEIACIIVEPVAGNMNCVPPLPEFLPGLRALCDEFGALLIIDEVMTGFRVALAGAQDYYGVVPDLTCLGKIIGGGMPVGAFGGRRDVMDALAPTGPVYQAGTLSGNPIAMAAGFACLNEVAQPGIHETLDELTTRLAEGLCEAAQEVGIPLVVNHVGGMFGIFFTDAETVTCYQDVMACDVERFKRFFHLMLEEGVYLAPSAFEAGFMSVAHSEEDINNTIDAARRVFAKQ.

Lys265 is modified (N6-(pyridoxal phosphate)lysine).

The protein belongs to the class-III pyridoxal-phosphate-dependent aminotransferase family. HemL subfamily. Homodimer. It depends on pyridoxal 5'-phosphate as a cofactor.

It localises to the cytoplasm. It carries out the reaction (S)-4-amino-5-oxopentanoate = 5-aminolevulinate. The protein operates within porphyrin-containing compound metabolism; protoporphyrin-IX biosynthesis; 5-aminolevulinate from L-glutamyl-tRNA(Glu): step 2/2. In Salmonella choleraesuis (strain SC-B67), this protein is Glutamate-1-semialdehyde 2,1-aminomutase.